Consider the following 214-residue polypeptide: Histidine biosynthesis bifunctional protein HisIE (214 aa).

The interval 1–114 (MDLSAVRFDE…LEGEKDLGFV (114 aa)) is phosphoribosyl-AMP cyclohydrolase. A phosphoribosyl-ATP pyrophosphohydrolase region spans residues 115–214 (VGQVYATIKE…RSPYDGSHGN (100 aa)).

The protein in the N-terminal section; belongs to the PRA-CH family. In the C-terminal section; belongs to the PRA-PH family.

Its subcellular location is the cytoplasm. The catalysed reaction is 1-(5-phospho-beta-D-ribosyl)-ATP + H2O = 1-(5-phospho-beta-D-ribosyl)-5'-AMP + diphosphate + H(+). It carries out the reaction 1-(5-phospho-beta-D-ribosyl)-5'-AMP + H2O = 1-(5-phospho-beta-D-ribosyl)-5-[(5-phospho-beta-D-ribosylamino)methylideneamino]imidazole-4-carboxamide. It functions in the pathway amino-acid biosynthesis; L-histidine biosynthesis; L-histidine from 5-phospho-alpha-D-ribose 1-diphosphate: step 2/9. Its pathway is amino-acid biosynthesis; L-histidine biosynthesis; L-histidine from 5-phospho-alpha-D-ribose 1-diphosphate: step 3/9. This Thermus thermophilus (strain ATCC BAA-163 / DSM 7039 / HB27) protein is Histidine biosynthesis bifunctional protein HisIE.